We begin with the raw amino-acid sequence, 746 residues long: NAD(P)H-quinone oxidoreductase subunit 5, chloroplastic (746 aa).

16 helical membrane passes run 9–29 (WIIP…LLLF), 40–60 (WTFL…YLSI), 89–109 (IDPL…LVLI), 125–145 (FAYM…SNLI), 147–167 (VYFF…FWFT), 185–205 (GDFG…SFEF), 221–241 (VNLL…IAKS), 258–278 (TPIS…FLVA), 280–300 (LLPL…IGII), 327–347 (LGYM…FHLI), 354–374 (ALLF…VGYS), 396–416 (TAFL…CFWS), 425–445 (LLFS…TAFY), 547–567 (ILFP…IGIP), 608–628 (FSVS…KPFY), and 723–743 (YLFL…FFYF).

Belongs to the complex I subunit 5 family. In terms of assembly, NDH is composed of at least 16 different subunits, 5 of which are encoded in the nucleus.

The protein localises to the plastid. The protein resides in the chloroplast thylakoid membrane. It carries out the reaction a plastoquinone + NADH + (n+1) H(+)(in) = a plastoquinol + NAD(+) + n H(+)(out). It catalyses the reaction a plastoquinone + NADPH + (n+1) H(+)(in) = a plastoquinol + NADP(+) + n H(+)(out). Functionally, NDH shuttles electrons from NAD(P)H:plastoquinone, via FMN and iron-sulfur (Fe-S) centers, to quinones in the photosynthetic chain and possibly in a chloroplast respiratory chain. The immediate electron acceptor for the enzyme in this species is believed to be plastoquinone. Couples the redox reaction to proton translocation, and thus conserves the redox energy in a proton gradient. This Olimarabidopsis pumila (Dwarf rocket) protein is NAD(P)H-quinone oxidoreductase subunit 5, chloroplastic (ndhF).